The primary structure comprises 286 residues: Serine carboxypeptidase-like (286 aa).

The active site involves Ser4. Intrachain disulfides connect Cys83/Cys98 and Cys121/Cys126. Asp193 is a catalytic residue. Cys196 contacts substrate. A glycan (N-linked (GlcNAc...) asparagine) is linked at Asn227. His250 is an active-site residue.

It belongs to the peptidase S10 family.

Functionally, involved in degradation of small peptides. The chain is Serine carboxypeptidase-like from Pisum sativum (Garden pea).